The primary structure comprises 425 residues: UPF0597 protein VF_0641 (425 aa).

Belongs to the UPF0597 family.

The protein is UPF0597 protein VF_0641 of Aliivibrio fischeri (strain ATCC 700601 / ES114) (Vibrio fischeri).